Reading from the N-terminus, the 400-residue chain is 3-phenylpropionate/cinnamic acid dioxygenase ferredoxin--NAD(+) reductase component (400 aa).

5-36 (TIIIVGGGQAAAMAAASLRQQGFTGELHLFSD) is an FAD binding site. 146-174 (SVVIVGAGTIGLELAASATQRRCKVTVIE) contributes to the NAD(+) binding site.

The protein belongs to the bacterial ring-hydroxylating dioxygenase ferredoxin reductase family. In terms of assembly, this dioxygenase system consists of four proteins: the two subunits of the hydroxylase component (HcaE and HcaF), a ferredoxin (HcaC) and a ferredoxin reductase (HcaD). The cofactor is FAD.

It carries out the reaction 2 reduced [2Fe-2S]-[ferredoxin] + NAD(+) + H(+) = 2 oxidized [2Fe-2S]-[ferredoxin] + NADH. The protein operates within aromatic compound metabolism; 3-phenylpropanoate degradation. In terms of biological role, part of the multicomponent 3-phenylpropionate dioxygenase, that converts 3-phenylpropionic acid (PP) and cinnamic acid (CI) into 3-phenylpropionate-dihydrodiol (PP-dihydrodiol) and cinnamic acid-dihydrodiol (CI-dihydrodiol), respectively. This is 3-phenylpropionate/cinnamic acid dioxygenase ferredoxin--NAD(+) reductase component from Escherichia coli O157:H7.